A 312-amino-acid polypeptide reads, in one-letter code: DNA primase small subunit PriS (312 aa).

Catalysis depends on residues Asp88, Asp90, and Asp215.

The protein belongs to the eukaryotic-type primase small subunit family. Heterodimer of a small subunit (PriS) and a large subunit (PriL). Requires Mg(2+) as cofactor. Mn(2+) serves as cofactor.

Catalytic subunit of DNA primase, an RNA polymerase that catalyzes the synthesis of short RNA molecules used as primers for DNA polymerase during DNA replication. The small subunit contains the primase catalytic core and has DNA synthesis activity on its own. Binding to the large subunit stabilizes and modulates the activity, increasing the rate of DNA synthesis while decreasing the length of the DNA fragments, and conferring RNA synthesis capability. The DNA polymerase activity may enable DNA primase to also catalyze primer extension after primer synthesis. May also play a role in DNA repair. In Pyrobaculum aerophilum (strain ATCC 51768 / DSM 7523 / JCM 9630 / CIP 104966 / NBRC 100827 / IM2), this protein is DNA primase small subunit PriS.